A 279-amino-acid chain; its full sequence is Pantothenate synthetase (279 aa).

26 to 33 (MGNLHEGH) contacts ATP. H33 acts as the Proton donor in catalysis. Q57 lines the (R)-pantoate pocket. Q57 contacts beta-alanine. ATP is bound at residue 144–147 (GKKD). Position 150 (Q150) interacts with (R)-pantoate. ATP is bound by residues V173 and 181-184 (LSSR).

It belongs to the pantothenate synthetase family. As to quaternary structure, homodimer.

Its subcellular location is the cytoplasm. It carries out the reaction (R)-pantoate + beta-alanine + ATP = (R)-pantothenate + AMP + diphosphate + H(+). Its pathway is cofactor biosynthesis; (R)-pantothenate biosynthesis; (R)-pantothenate from (R)-pantoate and beta-alanine: step 1/1. Functionally, catalyzes the condensation of pantoate with beta-alanine in an ATP-dependent reaction via a pantoyl-adenylate intermediate. The chain is Pantothenate synthetase from Burkholderia orbicola (strain MC0-3).